Consider the following 441-residue polypeptide: Ribulose bisphosphate carboxylase large chain (441 aa).

The residue at position 5 (Lys-5) is an N6,N6,N6-trimethyllysine. Substrate contacts are provided by Asn-114 and Thr-164. Lys-166 (proton acceptor) is an active-site residue. A substrate-binding site is contributed by Lys-168. Lys-192, Asp-194, and Glu-195 together coordinate Mg(2+). Lys-192 carries the N6-carboxylysine modification. His-285 serves as the catalytic Proton acceptor. Positions 286, 318, and 370 each coordinate substrate.

The protein belongs to the RuBisCO large chain family. Type I subfamily. As to quaternary structure, heterohexadecamer of 8 large chains and 8 small chains; disulfide-linked. The disulfide link is formed within the large subunit homodimers. Requires Mg(2+) as cofactor. The disulfide bond which can form in the large chain dimeric partners within the hexadecamer appears to be associated with oxidative stress and protein turnover.

Its subcellular location is the plastid. It localises to the chloroplast. The enzyme catalyses 2 (2R)-3-phosphoglycerate + 2 H(+) = D-ribulose 1,5-bisphosphate + CO2 + H2O. It catalyses the reaction D-ribulose 1,5-bisphosphate + O2 = 2-phosphoglycolate + (2R)-3-phosphoglycerate + 2 H(+). In terms of biological role, ruBisCO catalyzes two reactions: the carboxylation of D-ribulose 1,5-bisphosphate, the primary event in carbon dioxide fixation, as well as the oxidative fragmentation of the pentose substrate in the photorespiration process. Both reactions occur simultaneously and in competition at the same active site. This Drosera dichrosepala (Rusty sundew) protein is Ribulose bisphosphate carboxylase large chain.